A 144-amino-acid polypeptide reads, in one-letter code: Large ribosomal subunit protein uL11 (144 aa).

This sequence belongs to the universal ribosomal protein uL11 family. Part of the ribosomal stalk of the 50S ribosomal subunit. Interacts with L10 and the large rRNA to form the base of the stalk. L10 forms an elongated spine to which L12 dimers bind in a sequential fashion forming a multimeric L10(L12)X complex. Post-translationally, one or more lysine residues are methylated.

Forms part of the ribosomal stalk which helps the ribosome interact with GTP-bound translation factors. In Granulibacter bethesdensis (strain ATCC BAA-1260 / CGDNIH1), this protein is Large ribosomal subunit protein uL11.